The sequence spans 358 residues: MLERLNFIENKYEELSNKISDPSVMANQKEWQKLCKEHADLEIIVNTYREYKKAQEDLESDKEMLKEESDKELREMAQEEIKELTLKLEDLERELTILLLPKDPNDDKDVFIEIRAGAGGEEAALFASNLLRMYTRYAERKNWKVETISLNATDIGGFKEVTVAVKGKGAYSRLKYESGVHRVQRVPDTESSGRIHTSTATVAVLPEVDDVDININANDLRIDVYRASGHGGQCVNTTDSAVRITHLPTGLVVTCQDEKSQLKNKEKAMKVLKARLFEAAEAERAASIAEDRKSQVGTGDRSERIRTYNYPQGRITDHRIGLTLYKLETFLDGDIDEAIEALVTEDQAEKMKNLGRVN.

Position 233 is an N5-methylglutamine (Gln233).

It belongs to the prokaryotic/mitochondrial release factor family. In terms of processing, methylated by PrmC. Methylation increases the termination efficiency of RF1.

It localises to the cytoplasm. Its function is as follows. Peptide chain release factor 1 directs the termination of translation in response to the peptide chain termination codons UAG and UAA. The chain is Peptide chain release factor 1 from Clostridium botulinum (strain Loch Maree / Type A3).